We begin with the raw amino-acid sequence, 538 residues long: MFS-type transporter tndD (538 aa).

The tract at residues 1 to 42 (MSLSGSDSHLAVSPTLAEDMNSSDTSAGLAETPPADEEKRSI) is disordered. Asparagine 21 and asparagine 71 each carry an N-linked (GlcNAc...) asparagine glycan. 11 consecutive transmembrane segments (helical) span residues 81–101 (VGIV…FAPG), 115–135 (LLAG…PLIL), 153–173 (ICFT…MLIA), 203–223 (GGVI…GPVA), 235–255 (WVFW…FLFL), 309–329 (PIVA…YLMF), 348–368 (GLTF…IGAV), 394–414 (LPPL…YGWS), 422–442 (IVPI…FMCI), 444–464 (SYLV…NTVV), and 485–505 (LGWG…IPWA).

The protein belongs to the major facilitator superfamily.

Its subcellular location is the membrane. Its function is as follows. MFS-type transporter; part of the gene cluster that mediates the biosynthesis of talaronoid C, a fusicoccane diterpenoid with an unprecedented tricyclic 5/8/6 ring system. In Aspergillus flavipes, this protein is MFS-type transporter tndD.